Reading from the N-terminus, the 435-residue chain is Adenylosuccinate synthetase (435 aa).

Residues 11 to 17 and 39 to 41 contribute to the GTP site; these read GDEGKGK and GHT. D12 functions as the Proton acceptor in the catalytic mechanism. The Mg(2+) site is built by D12 and G39. IMP is bound by residues 12–15, 37–40, T128, R142, Q223, T238, and R302; these read DEGK and NAGH. H40 (proton donor) is an active-site residue. 298-304 serves as a coordination point for substrate; it reads SVTGRPR. GTP is bound by residues R304, 330 to 332, and 412 to 414; these read KLD and STG.

Belongs to the adenylosuccinate synthetase family. Homodimer. Requires Mg(2+) as cofactor.

It is found in the cytoplasm. The enzyme catalyses IMP + L-aspartate + GTP = N(6)-(1,2-dicarboxyethyl)-AMP + GDP + phosphate + 2 H(+). The protein operates within purine metabolism; AMP biosynthesis via de novo pathway; AMP from IMP: step 1/2. Functionally, plays an important role in the de novo pathway of purine nucleotide biosynthesis. Catalyzes the first committed step in the biosynthesis of AMP from IMP. This chain is Adenylosuccinate synthetase, found in Coxiella burnetii (strain RSA 331 / Henzerling II).